We begin with the raw amino-acid sequence, 617 residues long: Kelch-like protein 9 (617 aa).

The BTB domain maps to 50-119 (CDVTLVPGDG…IYTAKLSLNM (70 aa)). A BACK domain is found at 154–255 (CVEVGRIANT…TPQDLINYVQ (102 aa)). Kelch repeat units lie at residues 299–347 (HLVT…VIGN), 348–399 (FLYV…ALKG), 400–446 (HLYA…VYGG), 448–493 (MYIS…TVGD), 495–545 (LYVI…VFEN), and 546–594 (KIYV…TLTV). Residues 595–617 (FPPEENPGSPSRESPLSAPSDHS) form a disordered region.

As to quaternary structure, component of the BCR(KLHL9-KLHL13) E3 ubiquitin ligase complex, at least composed of CUL3, KLHL9, KLHL13 and RBX1. Interacts with AURKB.

It participates in protein modification; protein ubiquitination. Its function is as follows. Substrate-specific adapter of a BCR (BTB-CUL3-RBX1) E3 ubiquitin-protein ligase complex required for mitotic progression and cytokinesis. The BCR(KLHL9-KLHL13) E3 ubiquitin ligase complex mediates the ubiquitination of AURKB and controls the dynamic behavior of AURKB on mitotic chromosomes and thereby coordinates faithful mitotic progression and completion of cytokinesis. The polypeptide is Kelch-like protein 9 (Klhl9) (Mus musculus (Mouse)).